The primary structure comprises 310 residues: O-acetylserine sulfhydrylase (310 aa).

Residue Lys-44 is modified to N6-(pyridoxal phosphate)lysine. Residues Asn-74, 178-182 (GTGGT), and Ser-266 contribute to the pyridoxal 5'-phosphate site.

Belongs to the cysteine synthase/cystathionine beta-synthase family. As to quaternary structure, homodimer. Pyridoxal 5'-phosphate serves as cofactor.

It carries out the reaction O-acetyl-L-serine + hydrogen sulfide = L-cysteine + acetate. It functions in the pathway amino-acid biosynthesis; L-cysteine biosynthesis; L-cysteine from L-serine: step 2/2. In terms of biological role, catalyzes the conversion of O-acetylserine (OAS) to cysteine through the elimination of acetate and addition of hydrogen sulfide. The sequence is that of O-acetylserine sulfhydrylase (cysK) from Mycobacterium bovis (strain ATCC BAA-935 / AF2122/97).